We begin with the raw amino-acid sequence, 320 residues long: Ferrochelatase (320 aa).

The Fe cation site is built by His-194 and Glu-275.

It belongs to the ferrochelatase family.

The protein resides in the cytoplasm. The catalysed reaction is heme b + 2 H(+) = protoporphyrin IX + Fe(2+). The protein operates within porphyrin-containing compound metabolism; protoheme biosynthesis; protoheme from protoporphyrin-IX: step 1/1. Functionally, catalyzes the ferrous insertion into protoporphyrin IX. This is Ferrochelatase from Xylella fastidiosa (strain M23).